The primary structure comprises 317 residues: 4-hydroxy-3-methylbut-2-enyl diphosphate reductase (317 aa).

Cys12 provides a ligand contact to [4Fe-4S] cluster. (2E)-4-hydroxy-3-methylbut-2-enyl diphosphate is bound by residues His41 and His74. The dimethylallyl diphosphate site is built by His41 and His74. Isopentenyl diphosphate is bound by residues His41 and His74. Cys97 contributes to the [4Fe-4S] cluster binding site. His125 is a (2E)-4-hydroxy-3-methylbut-2-enyl diphosphate binding site. His125 is a dimethylallyl diphosphate binding site. Position 125 (His125) interacts with isopentenyl diphosphate. The active-site Proton donor is the Glu127. Thr168 serves as a coordination point for (2E)-4-hydroxy-3-methylbut-2-enyl diphosphate. Cys198 serves as a coordination point for [4Fe-4S] cluster. (2E)-4-hydroxy-3-methylbut-2-enyl diphosphate-binding residues include Ser226, Ser227, Asn228, and Ser270. 4 residues coordinate dimethylallyl diphosphate: Ser226, Ser227, Asn228, and Ser270. Isopentenyl diphosphate is bound by residues Ser226, Ser227, Asn228, and Ser270.

The protein belongs to the IspH family. In terms of assembly, homodimer. Requires [4Fe-4S] cluster as cofactor.

The catalysed reaction is isopentenyl diphosphate + 2 oxidized [2Fe-2S]-[ferredoxin] + H2O = (2E)-4-hydroxy-3-methylbut-2-enyl diphosphate + 2 reduced [2Fe-2S]-[ferredoxin] + 2 H(+). It catalyses the reaction dimethylallyl diphosphate + 2 oxidized [2Fe-2S]-[ferredoxin] + H2O = (2E)-4-hydroxy-3-methylbut-2-enyl diphosphate + 2 reduced [2Fe-2S]-[ferredoxin] + 2 H(+). It functions in the pathway isoprenoid biosynthesis; dimethylallyl diphosphate biosynthesis; dimethylallyl diphosphate from (2E)-4-hydroxy-3-methylbutenyl diphosphate: step 1/1. The protein operates within isoprenoid biosynthesis; isopentenyl diphosphate biosynthesis via DXP pathway; isopentenyl diphosphate from 1-deoxy-D-xylulose 5-phosphate: step 6/6. Functionally, catalyzes the conversion of 1-hydroxy-2-methyl-2-(E)-butenyl 4-diphosphate (HMBPP) into a mixture of isopentenyl diphosphate (IPP) and dimethylallyl diphosphate (DMAPP). Acts in the terminal step of the DOXP/MEP pathway for isoprenoid precursor biosynthesis. This chain is 4-hydroxy-3-methylbut-2-enyl diphosphate reductase, found in Yersinia pseudotuberculosis serotype O:1b (strain IP 31758).